The primary structure comprises 378 residues: Erythronate-4-phosphate dehydrogenase (378 aa).

Substrate-binding residues include S45 and T66. The NAD(+) site is built by D146 and T175. Residue R208 is part of the active site. Residue D232 participates in NAD(+) binding. E237 is a catalytic residue. The active-site Proton donor is the H254. An NAD(+)-binding site is contributed by G257. Position 258 (Y258) interacts with substrate.

It belongs to the D-isomer specific 2-hydroxyacid dehydrogenase family. PdxB subfamily. As to quaternary structure, homodimer.

The protein localises to the cytoplasm. It catalyses the reaction 4-phospho-D-erythronate + NAD(+) = (R)-3-hydroxy-2-oxo-4-phosphooxybutanoate + NADH + H(+). It participates in cofactor biosynthesis; pyridoxine 5'-phosphate biosynthesis; pyridoxine 5'-phosphate from D-erythrose 4-phosphate: step 2/5. Catalyzes the oxidation of erythronate-4-phosphate to 3-hydroxy-2-oxo-4-phosphonooxybutanoate. The sequence is that of Erythronate-4-phosphate dehydrogenase from Escherichia coli (strain 55989 / EAEC).